A 977-amino-acid chain; its full sequence is Serine/threonine-protein kinase/endoribonuclease IRE1 (977 aa).

An N-terminal signal peptide occupies residues 1-18 (MPARRLLLLLTLLLPGLG). Topologically, residues 19 to 443 (IFGSTSTVTL…EAPVDSMLKD (425 aa)) are lumenal. N-linked (GlcNAc...) asparagine glycosylation occurs at asparagine 176. Positions 410 to 419 (TSENAPTTVS) are enriched in polar residues. Residues 410–434 (TSENAPTTVSRDVEEKPAHAPARPE) are disordered. A helical transmembrane segment spans residues 444 to 464 (MATIILSTFLLIGWVAFIITY). Over 465-977 (PLSMHQQQQL…PQPPVTPDAL (513 aa)) the chain is Cytoplasmic. Positions 491–559 (QQQQQLPFHP…PSLEQDDGDE (69 aa)) are disordered. A compositionally biased stretch (low complexity) spans 513–552 (TSGPYSESSGTSSPSTSPRASNHSLCSGSSASKAGSSPSL). The Protein kinase domain maps to 571–832 (FCPKDVLGHG…AKHVLKHPFF (262 aa)). ATP contacts are provided by residues 577–585 (LGHGAEGTI), lysine 599, and 643–645 (ELC). Aspartate 688 (proton acceptor) is an active-site residue. Residues 690–693 (KPHN) and aspartate 711 each bind ATP. 2 positions are modified to phosphoserine: serine 724 and serine 729. The region spanning 835–963 (LEKQLQFFQD…ERLFQPYYFH (129 aa)) is the KEN domain. Positions 906 to 907 (NK) are interacts with hydroxy-aryl-aldehyde inhibitors. Phosphothreonine is present on threonine 973.

It belongs to the protein kinase superfamily. Ser/Thr protein kinase family. As to quaternary structure, monomer. Homodimer; disulfide-linked; homodimerization takes place in response to endoplasmic reticulum stress and promotes activation of the kinase and endoribonuclease activities. Dimer formation is driven by hydrophobic interactions within the N-terminal luminal domains and stabilized by disulfide bridges. Interacts (via the luminal region) with DNAJB9/ERdj4; interaction takes place in unstressed cells and promotes recruitment of HSPA5/BiP. Interacts (via the luminal region) with HSPA5/BiP; HSPA5/BiP is a negative regulator of the unfolded protein response (UPR) that prevents homodimerization of ERN1/IRE1 and subsequent activation of the protein. Interaction with HSPA5 also competitively inhibits ERN1 interaction with MANF. Interacts with PDIA6, a negative regulator of the UPR; the interaction is direct and disrupts homodimerization. Interacts with DAB2IP (via PH domain); the interaction occurs in a endoplasmic reticulum stress-induced dependent manner and is required for subsequent recruitment of TRAF2 to ERN1/IRE1. Interacts with TAOK3 and TRAF2. Interacts with RNF13. Interacts with LACC1. Interacts (when unphosphorylated) with DDRGK1; interaction is dependent on UFM1 and takes place in response to endoplasmic reticulum stress, regulating ERN1/IRE1-alpha stability. Interacts (via N-terminus) with P4HB/PDIA1; the interaction is enhanced by phosphorylation of P4HB by FAM20C in response to endoplasmic reticulum stress and results in attenuation of ERN1 activity. Interacts with TMBIM6; this interaction inhibits ERN1 activity. Interacts (via luminal domain) with MANF (via C-terminus); the interaction is decreased in the presence of increasing concentrations of Ca(2+). The cofactor is Mg(2+). In terms of processing, autophosphorylated following homodimerization. Autophosphorylation promotes activation of the endoribonuclease domain. In response to ER stress, phosphorylated at Ser-724, Ser-729 and possibly Ser-726; phosphorylation promotes oligomerization and endoribonuclease activity. Dephosphorylated at Ser-724, Ser-729 and possibly Ser-726 by RPAP2 to abort failed ER-stress adaptation and trigger apoptosis. Phosphorylated at Ser-724; in response to the ER stressor tunicamycin. ADP-ribosylated by PARP16 upon ER stress, which increases both kinase and endonuclease activities. As to expression, ubiquitously expressed. High levels observed in pancreatic tissue.

The protein localises to the endoplasmic reticulum membrane. The catalysed reaction is L-seryl-[protein] + ATP = O-phospho-L-seryl-[protein] + ADP + H(+). The enzyme catalyses L-threonyl-[protein] + ATP = O-phospho-L-threonyl-[protein] + ADP + H(+). Its activity is regulated as follows. The kinase domain is activated by trans-autophosphorylation following homodimerization. Kinase activity is required for activation of the endoribonuclease domain. Endoribonuclease activity is specifically inhibited by hydroxy-aryl-aldehydes (HAA). Its function is as follows. Serine/threonine-protein kinase and endoribonuclease that acts as a key sensor for the endoplasmic reticulum unfolded protein response (UPR). In unstressed cells, the endoplasmic reticulum luminal domain is maintained in its inactive monomeric state by binding to the endoplasmic reticulum chaperone HSPA5/BiP. Accumulation of misfolded proteins in the endoplasmic reticulum causes release of HSPA5/BiP, allowing the luminal domain to homodimerize, promoting autophosphorylation of the kinase domain and subsequent activation of the endoribonuclease activity. The endoribonuclease activity is specific for XBP1 mRNA and excises 26 nucleotides from XBP1 mRNA. The resulting spliced transcript of XBP1 encodes a transcriptional activator protein that up-regulates expression of UPR target genes. Acts as an upstream signal for ER stress-induced GORASP2-mediated unconventional (ER/Golgi-independent) trafficking of CFTR to cell membrane by modulating the expression and localization of SEC16A. This is Serine/threonine-protein kinase/endoribonuclease IRE1 from Homo sapiens (Human).